The primary structure comprises 507 residues: Dolichyl pyrophosphate Man9GlcNAc2 alpha-1,3-glucosyltransferase (507 aa).

The Cytoplasmic segment spans residues 1–2; that stretch reads ME. A helical membrane pass occupies residues 3 to 23; the sequence is SWTWMTVVVLLGLTVRWTVSL. At 24–114 the chain is on the lumenal side; sequence NSYSGAGKPP…SQAHKLFMRT (91 aa). Asparagine 59 carries N-linked (GlcNAc...) asparagine glycosylation. A helical transmembrane segment spans residues 115–135; it reads TVLAADLLIYIPAVLLYCYSL. Residues 136 to 143 are Cytoplasmic-facing; it reads KEISPKRK. A helical membrane pass occupies residues 144–164; the sequence is IASALCILLYPGLILIDYGHF. At 165 to 172 the chain is on the lumenal side; it reads QYNSVSLG. Residues 173 to 193 traverse the membrane as a helical segment; the sequence is FALWGVLGVSCDWDLLGSLAF. The Cytoplasmic segment spans residues 194–229; sequence CLALNYKQMELYHSLPFFCFLLGKCFKKGLRGKGSA. Residues 230-250 form a helical membrane-spanning segment; that stretch reads LFIRIACTVVASFLLCWLPFL. Topologically, residues 251–297 are lumenal; that stretch reads TEREHALQVVRRLFPVDRGLFEDKVANIWCSLNVFLKIKDILPRHIQ. A helical transmembrane segment spans residues 298–318; it reads IAISFCFTFLSLLPACIKLTV. Residues 319-332 are Cytoplasmic-facing; the sequence is QPSAKGFRFTLVSC. A helical transmembrane segment spans residues 333–353; sequence ALSFFLFSFQVHEKSILLVSL. Residues 354-361 are Lumenal-facing; that stretch reads PVCLVLTE. Residues 362-382 form a helical membrane-spanning segment; it reads IPFMSTWFLLVSTFSMLPLLL. Residues 383–385 lie on the Cytoplasmic side of the membrane; the sequence is KDQ. The chain crosses the membrane as a helical span at residues 386–406; the sequence is LLLPSVVTVMAFLIACSTFFP. Residues 407–437 lie on the Lumenal side of the membrane; it reads MFENTSEEQLQLKSFAVSVRRHLPGFTFLPR. Residues 438 to 458 traverse the membrane as a helical segment; it reads IIQCLFLSSVITMILLTILSV. At 459–468 the chain is on the cytoplasmic side; sequence TLDPPQKLPD. A helical membrane pass occupies residues 469 to 489; it reads LFSVLICFVSCVNFVFFLVYF. The Lumenal portion of the chain corresponds to 490-507; that stretch reads NIVIMWDSKNGRNRKKID.

Belongs to the ALG6/ALG8 glucosyltransferase family.

It localises to the endoplasmic reticulum membrane. It carries out the reaction an alpha-D-Man-(1-&gt;2)-alpha-D-Man-(1-&gt;2)-alpha-D-Man-(1-&gt;3)-[alpha-D-Man-(1-&gt;2)-alpha-D-Man-(1-&gt;3)-[alpha-D-Man-(1-&gt;2)-alpha-D-Man-(1-&gt;6)]-alpha-D-Man-(1-&gt;6)]-beta-D-Man-(1-&gt;4)-beta-D-GlcNAc-(1-&gt;4)-alpha-D-GlcNAc-diphospho-di-trans,poly-cis-dolichol + a di-trans,poly-cis-dolichyl beta-D-glucosyl phosphate = an alpha-D-Glc-(1-&gt;3)-alpha-D-Man-(1-&gt;2)-alpha-D-Man-(1-&gt;2)-alpha-D-Man-(1-&gt;3)-[alpha-D-Man-(1-&gt;2)-alpha-D-Man-(1-&gt;3)-[alpha-D-Man-(1-&gt;2)-alpha-D-Man-(1-&gt;6)]-alpha-D-Man-(1-&gt;6)]-beta-D-Man-(1-&gt;4)-beta-D-GlcNAc-(1-&gt;4)-alpha-D-GlcNAc-diphospho-di-trans,poly-cis-dolichol + a di-trans,poly-cis-dolichyl phosphate + H(+). It functions in the pathway protein modification; protein glycosylation. Dolichyl pyrophosphate Man9GlcNAc2 alpha-1,3-glucosyltransferase that operates in the biosynthetic pathway of dolichol-linked oligosaccharides, the glycan precursors employed in protein asparagine (N)-glycosylation. The assembly of dolichol-linked oligosaccharides begins on the cytosolic side of the endoplasmic reticulum membrane and finishes in its lumen. The sequential addition of sugars to dolichol pyrophosphate produces dolichol-linked oligosaccharides containing fourteen sugars, including two GlcNAcs, nine mannoses and three glucoses. Once assembled, the oligosaccharide is transferred from the lipid to nascent proteins by oligosaccharyltransferases. In the lumen of the endoplasmic reticulum, adds the first glucose residue from dolichyl phosphate glucose (Dol-P-Glc) onto the lipid-linked oligosaccharide intermediate Man(9)GlcNAc(2)-PP-Dol to produce Glc(1)Man(9)GlcNAc(2)-PP-Dol. Glc(1)Man(9)GlcNAc(2)-PP-Dol is a substrate for ALG8, the following enzyme in the biosynthetic pathway. The protein is Dolichyl pyrophosphate Man9GlcNAc2 alpha-1,3-glucosyltransferase of Rattus norvegicus (Rat).